Reading from the N-terminus, the 409-residue chain is WW domain-containing oxidoreductase (409 aa).

Residues 1–23 (MIALPDTDSEDELPPGWEERATD) form a disordered region. 2 consecutive WW domains span residues 11 to 44 (DELP…HPRT) and 52 to 86 (GELP…DPRL). An NADP(+)-binding site is contributed by 128 to 134 (GANCGIG). S257 is a substrate binding site. The active-site Proton acceptor is Y288.

It belongs to the short-chain dehydrogenases/reductases (SDR) family.

Its subcellular location is the cytoplasm. It localises to the mitochondrion. It is found in the golgi apparatus. The protein localises to the lysosome. Its function is as follows. Putative oxidoreductase. May control genotoxic stress-induced cell death. May play a role in TGFB1 signaling and TGFB1-mediated cell death. May also play a role in tumor necrosis factor (TNF)-mediated cell death. May play a role in Wnt signaling. The chain is WW domain-containing oxidoreductase (Wwox) from Drosophila melanogaster (Fruit fly).